Here is a 230-residue protein sequence, read N- to C-terminus: Orotidine 5'-phosphate decarboxylase (230 aa).

Residues Asp-9, Lys-31, 58-67, Thr-120, Arg-180, Gln-188, Gly-208, and Arg-209 each bind substrate; that span reads DLKFFDIPNT. Lys-60 acts as the Proton donor in catalysis.

This sequence belongs to the OMP decarboxylase family. Type 1 subfamily. Homodimer.

The catalysed reaction is orotidine 5'-phosphate + H(+) = UMP + CO2. The protein operates within pyrimidine metabolism; UMP biosynthesis via de novo pathway; UMP from orotate: step 2/2. Functionally, catalyzes the decarboxylation of orotidine 5'-monophosphate (OMP) to uridine 5'-monophosphate (UMP). This is Orotidine 5'-phosphate decarboxylase from Maridesulfovibrio salexigens (strain ATCC 14822 / DSM 2638 / NCIMB 8403 / VKM B-1763) (Desulfovibrio salexigens).